The chain runs to 456 residues: Bifunctional protein GlmU (456 aa).

The segment at 1–229 is pyrophosphorylase; sequence MLNNAMSVVI…LSEVEGVNNR (229 aa). Residues 11–14, Lys25, Gln76, 81–82, 103–105, Gly140, Glu154, Asn169, and Asn227 each bind UDP-N-acetyl-alpha-D-glucosamine; these read LAAG, GT, and YGD. A Mg(2+)-binding site is contributed by Asp105. Asn227 provides a ligand contact to Mg(2+). Residues 230 to 250 are linker; sequence LQLSRLERVYQSEQAEKLLLA. Residues 251–456 are N-acetyltransferase; that stretch reads GVMLRDPARF…EGWRRPVKKK (206 aa). Arg333 and Lys351 together coordinate UDP-N-acetyl-alpha-D-glucosamine. His363 acts as the Proton acceptor in catalysis. Positions 366 and 377 each coordinate UDP-N-acetyl-alpha-D-glucosamine. Acetyl-CoA-binding positions include Ala380, 386-387, Ser405, Ala423, and Arg440; that span reads NY.

The protein in the N-terminal section; belongs to the N-acetylglucosamine-1-phosphate uridyltransferase family. It in the C-terminal section; belongs to the transferase hexapeptide repeat family. Homotrimer. It depends on Mg(2+) as a cofactor.

Its subcellular location is the cytoplasm. It carries out the reaction alpha-D-glucosamine 1-phosphate + acetyl-CoA = N-acetyl-alpha-D-glucosamine 1-phosphate + CoA + H(+). It catalyses the reaction N-acetyl-alpha-D-glucosamine 1-phosphate + UTP + H(+) = UDP-N-acetyl-alpha-D-glucosamine + diphosphate. The protein operates within nucleotide-sugar biosynthesis; UDP-N-acetyl-alpha-D-glucosamine biosynthesis; N-acetyl-alpha-D-glucosamine 1-phosphate from alpha-D-glucosamine 6-phosphate (route II): step 2/2. It participates in nucleotide-sugar biosynthesis; UDP-N-acetyl-alpha-D-glucosamine biosynthesis; UDP-N-acetyl-alpha-D-glucosamine from N-acetyl-alpha-D-glucosamine 1-phosphate: step 1/1. Its pathway is bacterial outer membrane biogenesis; LPS lipid A biosynthesis. Catalyzes the last two sequential reactions in the de novo biosynthetic pathway for UDP-N-acetylglucosamine (UDP-GlcNAc). The C-terminal domain catalyzes the transfer of acetyl group from acetyl coenzyme A to glucosamine-1-phosphate (GlcN-1-P) to produce N-acetylglucosamine-1-phosphate (GlcNAc-1-P), which is converted into UDP-GlcNAc by the transfer of uridine 5-monophosphate (from uridine 5-triphosphate), a reaction catalyzed by the N-terminal domain. The sequence is that of Bifunctional protein GlmU from Escherichia coli O127:H6 (strain E2348/69 / EPEC).